We begin with the raw amino-acid sequence, 54 residues long: Large ribosomal subunit protein bL33C (54 aa).

The protein belongs to the bacterial ribosomal protein bL33 family.

This is Large ribosomal subunit protein bL33C (rpmG3) from Streptomyces coelicolor (strain ATCC BAA-471 / A3(2) / M145).